The following is a 71-amino-acid chain: MMNRLLVFLMLGAFMLVVSANDAYGDEPAFKDLNQGDESLGKRKSCCPCWLRGNCFWGQNCYPEGCSGPKV.

An N-terminal signal peptide occupies residues 1–20; that stretch reads MMNRLLVFLMLGAFMLVVSA. A propeptide spanning residues 21–41 is cleaved from the precursor; sequence NDAYGDEPAFKDLNQGDESLG. Disulfide bonds link cysteine 46-cysteine 61, cysteine 47-cysteine 55, and cysteine 49-cysteine 66.

The protein belongs to the sea anemone short toxin (type III) family.

The protein resides in the secreted. The protein localises to the nematocyst. Voltage-gated sodium channel (Nav) inhibitor. 1 uM completely inhibits insect voltage-gated sodium channel inactivation (DmNav1 from D.melanogaster). The protein is Delta-actitoxin-Avd2b 4 of Anemonia viridis (Snakelocks anemone).